Here is a 271-residue protein sequence, read N- to C-terminus: WUSCHEL-related homeobox 6 (271 aa).

A DNA-binding region (homeobox; WUS-type) is located at residues 57–121 (AATLRWNPTP…NHKARERLKR (65 aa)). A disordered region spans residues 118–195 (RLKRRRREGG…TEESDQRASE (78 aa)). 2 stretches are compositionally biased toward basic and acidic residues: residues 132–148 (PHKDVKDSSSGGHRVDQ) and 180–195 (NEDHGTTEESDQRASE).

The protein belongs to the WUS homeobox family. Highly expressed in developing ovules. Present in developing primordia and differentiating organs but absent in mature organs.

It is found in the nucleus. Its function is as follows. Transcription factor that plays a central role in ovule patterning by regulating cell proliferation of the maternal integuments and differentiation of the maegaspore mother cell (MCC). Involved in AGAMOUS (AG) repression in leaves. The polypeptide is WUSCHEL-related homeobox 6 (WOX6) (Arabidopsis thaliana (Mouse-ear cress)).